The following is a 274-amino-acid chain: Proteasome subunit beta (274 aa).

A propeptide spans 1-52 (MADPLGAAGRLPAVFMTPGTSSFADFLSRSAPHLLPGARSGLPGPVTEVAHG) (removed in mature form; by autocatalysis). The Nucleophile role is filled by Thr-53.

Belongs to the peptidase T1B family. In terms of assembly, the 20S proteasome core is composed of 14 alpha and 14 beta subunits that assemble into four stacked heptameric rings, resulting in a barrel-shaped structure. The two inner rings, each composed of seven catalytic beta subunits, are sandwiched by two outer rings, each composed of seven alpha subunits. The catalytic chamber with the active sites is on the inside of the barrel. Has a gated structure, the ends of the cylinder being occluded by the N-termini of the alpha-subunits. Is capped by the proteasome-associated ATPase, ARC.

It is found in the cytoplasm. The catalysed reaction is Cleavage of peptide bonds with very broad specificity.. It functions in the pathway protein degradation; proteasomal Pup-dependent pathway. Its activity is regulated as follows. The formation of the proteasomal ATPase ARC-20S proteasome complex, likely via the docking of the C-termini of ARC into the intersubunit pockets in the alpha-rings, may trigger opening of the gate for substrate entry. Interconversion between the open-gate and close-gate conformations leads to a dynamic regulation of the 20S proteasome proteolysis activity. Functionally, component of the proteasome core, a large protease complex with broad specificity involved in protein degradation. The protein is Proteasome subunit beta of Frankia casuarinae (strain DSM 45818 / CECT 9043 / HFP020203 / CcI3).